Reading from the N-terminus, the 538-residue chain is Calcium-dependent protein kinase 32 (538 aa).

A disordered region spans residues 1–37; that stretch reads MGNCCGTAGSLAQNDNKPKKGRKKQNPFSIDYGLHHG. Residue Gly-2 is the site of N-myristoyl glycine attachment. One can recognise a Protein kinase domain in the interval 63–321; sequence YTLGRELGRG…AQQVLDHPWL (259 aa). ATP-binding positions include 69–77 and Lys-92; that span reads LGRGEFGVT. Asp-187 functions as the Proton acceptor in the catalytic mechanism. Ser-227 is modified (phosphoserine). The autoinhibitory domain stretch occupies residues 327–357; it reads APNVSLGETVRARLKQFTVMNKLKKRALRVI. EF-hand domains follow at residues 364-399, 400-435, 436-470, and 471-506; these read EEAS…LGHA, IPQD…LRKM, GNDE…DELG, and TSEE…GTDW. Residues Asp-377, Ser-379, Lys-383, Glu-388, Asp-413, Asp-415, Asp-417, Tyr-419, Glu-424, Asp-449, Asn-451, Asn-453, Tyr-455, Glu-460, Asp-484, Asp-486, Asp-488, and Arg-490 each coordinate Ca(2+). Ser-492 bears the Phosphoserine mark. Ca(2+) is bound at residue Glu-495.

The protein belongs to the protein kinase superfamily. Ser/Thr protein kinase family. CDPK subfamily. In terms of assembly, interacts with ABF4. Interacts with CNGC18. Expressed in embryos and most of the vegetative tissues.

Its subcellular location is the nucleus. It localises to the membrane. It carries out the reaction L-seryl-[protein] + ATP = O-phospho-L-seryl-[protein] + ADP + H(+). The catalysed reaction is L-threonyl-[protein] + ATP = O-phospho-L-threonyl-[protein] + ADP + H(+). Activated by calcium. Autophosphorylation may play an important role in the regulation of the kinase activity. May play a role in signal transduction pathways that involve calcium as a second messenger. Involved in maintaining Ca2+ homeostasis in pollen tube tips by regulating CNGC18. Functions as regulator of the calcium-mediated abscisic acid (ABA) signaling pathway. Phosphorylates ABA-responsive transcription factor ABF4 in vitro. The sequence is that of Calcium-dependent protein kinase 32 from Arabidopsis thaliana (Mouse-ear cress).